We begin with the raw amino-acid sequence, 59 residues long: Single-pass membrane and coiled-coil domain-containing protein 4 homolog (59 aa).

Positions 1 to 11 are enriched in basic residues; the sequence is MAGRNKAKPRL. Positions 1 to 20 are disordered; it reads MAGRNKAKPRLSKKEKEERR. Positions 10-30 form a coiled coil; that stretch reads RLSKKEKEERRKDMAEVQEKV. A helical membrane pass occupies residues 30-50; it reads VFSVVVPVVVAFTVVIMLIVY.

The protein belongs to the SMCO4 family.

The protein resides in the membrane. The protein is Single-pass membrane and coiled-coil domain-containing protein 4 homolog of Argas monolakensis (Mono lake bird tick).